The sequence spans 422 residues: Dihydroorotase (422 aa).

Residues His-57 and His-59 each coordinate Zn(2+). Substrate-binding positions include 59-61 and Asn-91; that span reads HLR. Asp-149, His-176, and His-229 together coordinate Zn(2+). Asn-275 contacts substrate. Residue Asp-302 participates in Zn(2+) binding. The active site involves Asp-302. Substrate-binding positions include His-306 and 320–321; that span reads FG.

It belongs to the metallo-dependent hydrolases superfamily. DHOase family. Class I DHOase subfamily. It depends on Zn(2+) as a cofactor.

The catalysed reaction is (S)-dihydroorotate + H2O = N-carbamoyl-L-aspartate + H(+). It participates in pyrimidine metabolism; UMP biosynthesis via de novo pathway; (S)-dihydroorotate from bicarbonate: step 3/3. Catalyzes the reversible cyclization of carbamoyl aspartate to dihydroorotate. The sequence is that of Dihydroorotase from Endomicrobium trichonymphae.